Consider the following 1159-residue polypeptide: ATP-dependent helicase/deoxyribonuclease subunit B (1159 aa).

8-15 provides a ligand contact to ATP; sequence GRAGSGKT. [4Fe-4S] cluster-binding residues include cysteine 784, cysteine 1102, cysteine 1105, and cysteine 1111. The disordered stretch occupies residues 1140–1159; the sequence is VKEDGSQVDGRTEGSDNNEG.

This sequence belongs to the helicase family. AddB/RexB type 1 subfamily. In terms of assembly, heterodimer of AddA and AddB. Requires Mg(2+) as cofactor. The cofactor is [4Fe-4S] cluster.

Its function is as follows. The heterodimer acts as both an ATP-dependent DNA helicase and an ATP-dependent, dual-direction single-stranded exonuclease. Recognizes the chi site generating a DNA molecule suitable for the initiation of homologous recombination. The AddB subunit has 5' -&gt; 3' nuclease activity but not helicase activity. This is ATP-dependent helicase/deoxyribonuclease subunit B from Caldanaerobacter subterraneus subsp. tengcongensis (strain DSM 15242 / JCM 11007 / NBRC 100824 / MB4) (Thermoanaerobacter tengcongensis).